We begin with the raw amino-acid sequence, 254 residues long: Segregation and condensation protein A (254 aa).

The protein belongs to the ScpA family. In terms of assembly, component of a cohesin-like complex composed of ScpA, ScpB and the Smc homodimer, in which ScpA and ScpB bind to the head domain of Smc. The presence of the three proteins is required for the association of the complex with DNA.

It localises to the cytoplasm. Its function is as follows. Participates in chromosomal partition during cell division. May act via the formation of a condensin-like complex containing Smc and ScpB that pull DNA away from mid-cell into both cell halves. This chain is Segregation and condensation protein A, found in Brevibacillus brevis (strain 47 / JCM 6285 / NBRC 100599).